The sequence spans 241 residues: E3 ubiquitin-protein ligase RNF166 (241 aa).

Residues Val-8–Ser-30 are disordered. An RING-type zinc finger spans residues Cys-37 to Arg-77. Residues Cys-102, Cys-105, His-117, and Cys-121 each coordinate Zn(2+). A C2HC RNF-type zinc finger spans residues Cys-102 to Cys-121. One can recognise a UIM domain in the interval Asp-225–Asn-241.

It localises to the cytoplasm. It catalyses the reaction S-ubiquitinyl-[E2 ubiquitin-conjugating enzyme]-L-cysteine + [acceptor protein]-L-lysine = [E2 ubiquitin-conjugating enzyme]-L-cysteine + N(6)-ubiquitinyl-[acceptor protein]-L-lysine.. It participates in protein modification; protein ubiquitination. Functionally, E3 ubiquitin-protein ligase that promotes the ubiquitination of different substrates. In Xenopus laevis (African clawed frog), this protein is E3 ubiquitin-protein ligase RNF166 (rnf166).